Reading from the N-terminus, the 790-residue chain is Ribonucleoside-diphosphate reductase large subunit (790 aa).

Residues threonine 208, 223 to 224 (SC), glycine 254, 436 to 440 (NLCTE), and 621 to 625 (PTVSS) each bind substrate. A disulfide bridge links cysteine 224 with cysteine 453. The active-site Proton acceptor is asparagine 436. Cysteine 438 acts as the Cysteine radical intermediate in catalysis. Catalysis depends on glutamate 440, which acts as the Proton acceptor.

The protein belongs to the ribonucleoside diphosphate reductase large chain family. As to quaternary structure, heterotetramer composed of a homodimer of the large subunit (R1) and a homodimer of the small subunit (R2). Larger multisubunit protein complex are also active, composed of (R1)n(R2)n.

The catalysed reaction is a 2'-deoxyribonucleoside 5'-diphosphate + [thioredoxin]-disulfide + H2O = a ribonucleoside 5'-diphosphate + [thioredoxin]-dithiol. Ribonucleoside-diphosphate reductase holoenzyme provides the precursors necessary for viral DNA synthesis. Allows virus growth in non-dividing cells, as well as reactivation from latency in infected hosts. Catalyzes the biosynthesis of deoxyribonucleotides from the corresponding ribonucleotides. The sequence is that of Ribonucleoside-diphosphate reductase large subunit from Equus caballus (Horse).